The sequence spans 122 residues: Large ribosomal subunit protein uL14 (122 aa).

This sequence belongs to the universal ribosomal protein uL14 family. Part of the 50S ribosomal subunit. Forms a cluster with proteins L3 and L19. In the 70S ribosome, L14 and L19 interact and together make contacts with the 16S rRNA in bridges B5 and B8.

Binds to 23S rRNA. Forms part of two intersubunit bridges in the 70S ribosome. The protein is Large ribosomal subunit protein uL14 of Fervidobacterium nodosum (strain ATCC 35602 / DSM 5306 / Rt17-B1).